A 424-amino-acid chain; its full sequence is D-inositol 3-phosphate glycosyltransferase (424 aa).

Histidine 9 serves as a coordination point for 1D-myo-inositol 3-phosphate. UDP-N-acetyl-alpha-D-glucosamine is bound by residues 15-16 (QP) and glycine 23. Residues 20–25 (DSGGMN), lysine 78, tyrosine 110, threonine 134, and arginine 154 contribute to the 1D-myo-inositol 3-phosphate site. Arginine 231, lysine 236, and arginine 294 together coordinate UDP-N-acetyl-alpha-D-glucosamine. The Mg(2+) site is built by tyrosine 303, arginine 304, and alanine 306. Residues glutamate 316 and glutamate 324 each contribute to the UDP-N-acetyl-alpha-D-glucosamine site. Threonine 330 contacts Mg(2+).

It belongs to the glycosyltransferase group 1 family. MshA subfamily. As to quaternary structure, homodimer.

It catalyses the reaction 1D-myo-inositol 3-phosphate + UDP-N-acetyl-alpha-D-glucosamine = 1D-myo-inositol 2-acetamido-2-deoxy-alpha-D-glucopyranoside 3-phosphate + UDP + H(+). Functionally, catalyzes the transfer of a N-acetyl-glucosamine moiety to 1D-myo-inositol 3-phosphate to produce 1D-myo-inositol 2-acetamido-2-deoxy-glucopyranoside 3-phosphate in the mycothiol biosynthesis pathway. This chain is D-inositol 3-phosphate glycosyltransferase, found in Corynebacterium efficiens (strain DSM 44549 / YS-314 / AJ 12310 / JCM 11189 / NBRC 100395).